We begin with the raw amino-acid sequence, 332 residues long: Beta-ketoacyl-[acyl-carrier-protein] synthase III (332 aa).

Active-site residues include Cys-116 and His-255. Residues 256–260 (QANLR) form an ACP-binding region. Residue Asn-285 is part of the active site.

It belongs to the thiolase-like superfamily. FabH family. In terms of assembly, homodimer.

It localises to the cytoplasm. The enzyme catalyses malonyl-[ACP] + acetyl-CoA + H(+) = 3-oxobutanoyl-[ACP] + CO2 + CoA. It functions in the pathway lipid metabolism; fatty acid biosynthesis. Catalyzes the condensation reaction of fatty acid synthesis by the addition to an acyl acceptor of two carbons from malonyl-ACP. Catalyzes the first condensation reaction which initiates fatty acid synthesis and may therefore play a role in governing the total rate of fatty acid production. Possesses both acetoacetyl-ACP synthase and acetyl transacylase activities. Its substrate specificity determines the biosynthesis of branched-chain and/or straight-chain of fatty acids. This chain is Beta-ketoacyl-[acyl-carrier-protein] synthase III, found in Helicobacter hepaticus (strain ATCC 51449 / 3B1).